The following is a 158-amino-acid chain: SsrA-binding protein (158 aa).

The segment at 130-158 (KGKKNHDKREAQAKRDWSRQKQRLLKDHG) is disordered. Basic and acidic residues predominate over residues 136 to 158 (DKREAQAKRDWSRQKQRLLKDHG).

It belongs to the SmpB family.

The protein resides in the cytoplasm. Required for rescue of stalled ribosomes mediated by trans-translation. Binds to transfer-messenger RNA (tmRNA), required for stable association of tmRNA with ribosomes. tmRNA and SmpB together mimic tRNA shape, replacing the anticodon stem-loop with SmpB. tmRNA is encoded by the ssrA gene; the 2 termini fold to resemble tRNA(Ala) and it encodes a 'tag peptide', a short internal open reading frame. During trans-translation Ala-aminoacylated tmRNA acts like a tRNA, entering the A-site of stalled ribosomes, displacing the stalled mRNA. The ribosome then switches to translate the ORF on the tmRNA; the nascent peptide is terminated with the 'tag peptide' encoded by the tmRNA and targeted for degradation. The ribosome is freed to recommence translation, which seems to be the essential function of trans-translation. The sequence is that of SsrA-binding protein from Ruegeria sp. (strain TM1040) (Silicibacter sp.).